A 328-amino-acid polypeptide reads, in one-letter code: DhaKLM operon coactivator DhaQ (328 aa).

The DhaK domain occupies 6 to 328; it reads STNEIPEEML…LNVPTGAFAW (323 aa). His215 carries the tele-(1,2,3-trihydroxypropan-2-yl)histidine modification.

In terms of assembly, homodimer. Interacts with a homodimer of DhaS.

In terms of biological role, coactivator for the transcription factor DhaS. The heterotetramer formed by DhaQ and DhaS functions as a transcriptional regulator. Activated by covalent binding of dihydroxyacetone to DhaQ. The complex activates the dhaKLM operon. The chain is DhaKLM operon coactivator DhaQ (dhaQ) from Lactococcus lactis subsp. lactis (strain IL1403) (Streptococcus lactis).